The primary structure comprises 160 residues: Major pollen allergen Bet v 1-C (160 aa).

The brassinolide site is built by Lys-55, Tyr-82, Tyr-84, and Asn-101.

The protein belongs to the BetVI family.

Its subcellular location is the cytoplasm. May be a general steroid carrier protein. This is Major pollen allergen Bet v 1-C (BETV1C) from Betula pendula (European white birch).